Consider the following 275-residue polypeptide: 2,3,4,5-tetrahydropyridine-2,6-dicarboxylate N-succinyltransferase (275 aa).

Substrate contacts are provided by R106 and D143.

It belongs to the transferase hexapeptide repeat family. Homotrimer.

The protein localises to the cytoplasm. It catalyses the reaction (S)-2,3,4,5-tetrahydrodipicolinate + succinyl-CoA + H2O = (S)-2-succinylamino-6-oxoheptanedioate + CoA. It participates in amino-acid biosynthesis; L-lysine biosynthesis via DAP pathway; LL-2,6-diaminopimelate from (S)-tetrahydrodipicolinate (succinylase route): step 1/3. This chain is 2,3,4,5-tetrahydropyridine-2,6-dicarboxylate N-succinyltransferase, found in Burkholderia mallei (strain NCTC 10247).